A 564-amino-acid polypeptide reads, in one-letter code: Phenylalanine--tRNA ligase beta subunit (564 aa).

One can recognise a B5 domain in the interval 286-362 (YFQNSLKINV…IGKGLDNFKS (77 aa)). Residues aspartate 340, aspartate 346, glutamate 349, and glutamate 350 each contribute to the Mg(2+) site.

It belongs to the phenylalanyl-tRNA synthetase beta subunit family. Type 2 subfamily. In terms of assembly, tetramer of two alpha and two beta subunits. Mg(2+) is required as a cofactor.

It localises to the cytoplasm. The enzyme catalyses tRNA(Phe) + L-phenylalanine + ATP = L-phenylalanyl-tRNA(Phe) + AMP + diphosphate + H(+). The protein is Phenylalanine--tRNA ligase beta subunit of Borrelia recurrentis (strain A1).